The following is a 236-amino-acid chain: Cutinase (236 aa).

The signal sequence occupies residues 1 to 20 (MSLTLFSFLSLVSILCIVTA). C66 and C143 are disulfide-bonded. The active-site Nucleophile is S154. A disulfide bridge links C202 with C209. The active site involves D206. Residue H218 is the Proton donor/acceptor of the active site.

It belongs to the cutinase family. Post-translationally, the 2 disulfide bonds play a critical role in holding the catalytic residues in juxta-position; reduction of the disulfide bridges results in the complete inactivation of the enzyme.

The protein localises to the secreted. The enzyme catalyses cutin + H2O = cutin monomers.. In terms of biological role, catalyzes the hydrolysis of complex carboxylic polyesters found in the cell wall of plants. Degrades cutin, a macromolecule that forms the structure of the plant cuticle. Allows pathogenic fungi to penetrate through the cuticular barrier into the host plant during the initial stage of fungal infection. The polypeptide is Cutinase (CUT1) (Blumeria hordei (Barley powdery mildew)).